The following is a 471-amino-acid chain: Glutamate--tRNA ligase (471 aa).

The short motif at 9-19 (PSPTGYLHVGG) is the 'HIGH' region element. Positions 98, 100, 125, and 127 each coordinate Zn(2+). The short motif at 237 to 241 (KLSKR) is the 'KMSKS' region element. Lys-240 is an ATP binding site.

This sequence belongs to the class-I aminoacyl-tRNA synthetase family. Glutamate--tRNA ligase type 1 subfamily. In terms of assembly, monomer. It depends on Zn(2+) as a cofactor.

Its subcellular location is the cytoplasm. The enzyme catalyses tRNA(Glu) + L-glutamate + ATP = L-glutamyl-tRNA(Glu) + AMP + diphosphate. Its function is as follows. Catalyzes the attachment of glutamate to tRNA(Glu) in a two-step reaction: glutamate is first activated by ATP to form Glu-AMP and then transferred to the acceptor end of tRNA(Glu). The sequence is that of Glutamate--tRNA ligase from Citrobacter koseri (strain ATCC BAA-895 / CDC 4225-83 / SGSC4696).